Here is a 245-residue protein sequence, read N- to C-terminus: Thiopurine S-methyltransferase (245 aa).

A Phosphoserine modification is found at serine 14. Residue 29–40 coordinates S-adenosyl-L-methionine; that stretch reads WREKWVDGKIGF. Phenylalanine 40 serves as a coordination point for substrate. Lysine 58 carries the post-translational modification N6-acetyllysine. The S-adenosyl-L-methionine site is built by leucine 69, glutamate 90, and arginine 152.

Belongs to the class I-like SAM-binding methyltransferase superfamily. TPMT family. As to quaternary structure, monomer.

Its subcellular location is the cytoplasm. The catalysed reaction is S-adenosyl-L-methionine + a thiopurine = S-adenosyl-L-homocysteine + a thiopurine S-methylether.. This Panthera tigris (Tiger) protein is Thiopurine S-methyltransferase (TPMT).